A 397-amino-acid chain; its full sequence is Mitochondrial inner membrane magnesium transporter LPE10 (397 aa).

A mitochondrion-targeting transit peptide spans 1–48; sequence MLFIRQLSVIPKAPAFAKFFHTAGLVRQKLSDPNHLAILLQKNLAQRN. Residues 318–338 traverse the membrane as a helical segment; sequence LMLLGLRFSIGLLSLAGSIFI. The YGMN signature appears at 342–345; it reads YGMN. Residues 355–375 traverse the membrane as a helical segment; it reads VGFPVVSTLGVILMAYLFAFS.

It belongs to the CorA metal ion transporter (MIT) (TC 1.A.35) family. In terms of assembly, forms homooligomers. Interacts with MRS2.

The protein localises to the mitochondrion inner membrane. Its function is as follows. Mitochondrial inner membrane magnesium transporter required for mitochondrial magnesium homeostasis. Modulates the conductance of the MRS2 channel. Involved in the splicing of mRNA group II introns in mitochondria by affecting mitochondrial magnesium concentrations, which are critical for group II intron splicing. The protein is Mitochondrial inner membrane magnesium transporter LPE10 (LPE10) of Kluyveromyces lactis (strain ATCC 8585 / CBS 2359 / DSM 70799 / NBRC 1267 / NRRL Y-1140 / WM37) (Yeast).